The chain runs to 1357 residues: DNA-directed RNA polymerase subunit beta (1357 aa).

It belongs to the RNA polymerase beta chain family. In terms of assembly, the RNAP catalytic core consists of 2 alpha, 1 beta, 1 beta' and 1 omega subunit. When a sigma factor is associated with the core the holoenzyme is formed, which can initiate transcription.

The enzyme catalyses RNA(n) + a ribonucleoside 5'-triphosphate = RNA(n+1) + diphosphate. Its function is as follows. DNA-dependent RNA polymerase catalyzes the transcription of DNA into RNA using the four ribonucleoside triphosphates as substrates. This chain is DNA-directed RNA polymerase subunit beta, found in Pseudomonas aeruginosa (strain UCBPP-PA14).